Consider the following 1019-residue polypeptide: Type VI secretion system spike protein VgrG2b (1019 aa).

The tract at residues 268–291 is disordered; the sequence is AGRPFTESRLRGHRRDARVASVSG. Histidine 935 contacts Zn(2+). Residue glutamate 936 is part of the active site. Residues histidine 939 and glutamate 983 each coordinate Zn(2+).

Belongs to the VgrG protein family. Interacts with Tla3; this interaction promotes Tle3 loading onto VgrG2b. Interacts with host gamma-tubulin ring complex components GCP1 and GCP4. It depends on Zn(2+) as a cofactor.

It localises to the secreted. Part of the H2 type VI secretion system (H2-T6SS) specialized secretion system, which delivers several virulence factors in both prokaryotic and eukaryotic cells during infection. Forms the spike at the tip of the elongating tube probably formed by haemolysin co-regulated protein 2b/Hcp2b. Allows the delivery of the Tle3 antibacterial toxin to target cells where it exerts its toxicity. Additionally, acts directly as an effector and promotes internalization by interacting with the host gamma-tubulin ring complex. Elicits toxicity also in the bacterial periplasm and disrupts bacterial cell morphology. Toxicity is counteracted by a cognate immunity protein. In Pseudomonas aeruginosa (strain ATCC 15692 / DSM 22644 / CIP 104116 / JCM 14847 / LMG 12228 / 1C / PRS 101 / PAO1), this protein is Type VI secretion system spike protein VgrG2b (vgrG2b).